Reading from the N-terminus, the 364-residue chain is Dihydroorotate dehydrogenase (quinone) (364 aa).

FMN contacts are provided by residues 62 to 66 (AGFDK) and T86. K66 is a substrate binding site. 111–115 (NRMGF) serves as a coordination point for substrate. FMN is bound by residues N142 and N175. N175 lines the substrate pocket. Residue S178 is the Nucleophile of the active site. Residue N180 coordinates substrate. FMN is bound by residues K216 and T244. 245 to 246 (NT) is a substrate binding site. FMN contacts are provided by residues G267, G296, and 317–318 (YT).

The protein belongs to the dihydroorotate dehydrogenase family. Type 2 subfamily. In terms of assembly, monomer. The cofactor is FMN.

It localises to the cell membrane. The catalysed reaction is (S)-dihydroorotate + a quinone = orotate + a quinol. Its pathway is pyrimidine metabolism; UMP biosynthesis via de novo pathway; orotate from (S)-dihydroorotate (quinone route): step 1/1. In terms of biological role, catalyzes the conversion of dihydroorotate to orotate with quinone as electron acceptor. In Anaeromyxobacter dehalogenans (strain 2CP-C), this protein is Dihydroorotate dehydrogenase (quinone).